Here is a 122-residue protein sequence, read N- to C-terminus: Small ribosomal subunit protein uS13 (122 aa).

Residues 95-122 are disordered; that stretch reads GLPVHGQRTHTNARTRKGPRRGAVGKKK.

This sequence belongs to the universal ribosomal protein uS13 family. As to quaternary structure, part of the 30S ribosomal subunit. Forms a loose heterodimer with protein S19. Forms two bridges to the 50S subunit in the 70S ribosome.

Located at the top of the head of the 30S subunit, it contacts several helices of the 16S rRNA. In the 70S ribosome it contacts the 23S rRNA (bridge B1a) and protein L5 of the 50S subunit (bridge B1b), connecting the 2 subunits; these bridges are implicated in subunit movement. Contacts the tRNAs in the A and P-sites. This chain is Small ribosomal subunit protein uS13, found in Desulfovibrio desulfuricans (strain ATCC 27774 / DSM 6949 / MB).